The chain runs to 706 residues: Transmembrane and coiled-coil domains protein 2 (706 aa).

Disordered stretches follow at residues 1 to 221 (MKRC…TTDT) and 251 to 280 (VALSLPSGPGHGDSDGPISLDVPDGAPDPQ). Ser6 carries the post-translational modification Phosphoserine. The span at 83–94 (GLKHLFHSRRRS) shows a compositional bias: basic residues. The segment covering 102–112 (SQEAQQQQQQQ) has biased composition (low complexity). Over residues 120-131 (PDEKERSPEMHR) the composition is skewed to basic and acidic residues. An Omega-N-methylarginine modification is found at Arg163. Positions 330-365 (KQVFEKKNQKSAQTIAQLHKKLEHYRRRLKEIEQNG) form a coiled coil. The residue at position 435 (Ser435) is a Phosphoserine. Positions 440 to 459 (AHLKDPMEDGPPEEAARALS) are disordered. Residues Ser461 and Ser467 each carry the phosphoserine modification. A disordered region spans residues 464-510 (LVSSPKYGSDDECSSASASSAGAGSNSGAGPGGALGSPRSNTLYGAP). The segment covering 477-487 (SSASASSAGAG) has biased composition (low complexity). The span at 488–498 (SNSGAGPGGAL) shows a compositional bias: gly residues. Ser500 is subject to Phosphoserine. Residues 511–630 (GNLDTLLEEL…QQQQVVQLEG (120 aa)) are a coiled coil. Helical transmembrane passes span 646 to 666 (VILALMAVLLVFVSTIANFIT) and 679 to 699 (ALLLLVLFLLWKHWASLTYLL).

The protein belongs to the TEX28 family. In terms of assembly, may form homodimers and heterodimers with TMCC2 or TMCC3 via the coiled-coil domains. Interacts with ribosomal proteins RPL4 and RPS6. Interacts with APOE and proteolytic processed C-terminal fragment C99 of the amyloid precursor protein (APP C99).

The protein localises to the endoplasmic reticulum membrane. In terms of biological role, may be involved in the regulation of the proteolytic processing of the amyloid precursor protein (APP) possibly also implicating APOE. The chain is Transmembrane and coiled-coil domains protein 2 from Mus musculus (Mouse).